The sequence spans 150 residues: MEDRLYEGIAQQAGIAGCTLVDARMVRTGRAVALQVFIEKDETTAVTIEDCAAVSRQLSLWLDVENPIHGAYRLEVSSPGLDRPLKNLHDFERFKGSQAEIHLHGLTQGRRRLQGELLGVEDQKIVLKNAEGRWTFALDDIHKARLVPQW.

Belongs to the RimP family.

The protein localises to the cytoplasm. Functionally, required for maturation of 30S ribosomal subunits. The protein is Ribosome maturation factor RimP of Acidithiobacillus ferrooxidans (strain ATCC 23270 / DSM 14882 / CIP 104768 / NCIMB 8455) (Ferrobacillus ferrooxidans (strain ATCC 23270)).